The following is a 205-amino-acid chain: Probable GTP-binding protein EngB (205 aa).

One can recognise an EngB-type G domain in the interval 27 to 201 (TGIEIAFAGR…AAKLDFWFSP (175 aa)). GTP-binding positions include 35 to 42 (GRSNAGKS), 62 to 66 (GRTQL), 80 to 83 (DLPG), 147 to 150 (TKAD), and 180 to 182 (FSA). Mg(2+)-binding residues include Ser-42 and Thr-64.

The protein belongs to the TRAFAC class TrmE-Era-EngA-EngB-Septin-like GTPase superfamily. EngB GTPase family. The cofactor is Mg(2+).

Functionally, necessary for normal cell division and for the maintenance of normal septation. The chain is Probable GTP-binding protein EngB from Haemophilus influenzae (strain 86-028NP).